A 225-amino-acid chain; its full sequence is Ribosome maturation factor RimM (225 aa).

One can recognise a PRC barrel domain in the interval 144-225; it reads ADEFYWVDLI…RIVVDWEADY (82 aa).

This sequence belongs to the RimM family. As to quaternary structure, binds ribosomal protein uS19.

It is found in the cytoplasm. Functionally, an accessory protein needed during the final step in the assembly of 30S ribosomal subunit, possibly for assembly of the head region. Essential for efficient processing of 16S rRNA. May be needed both before and after RbfA during the maturation of 16S rRNA. It has affinity for free ribosomal 30S subunits but not for 70S ribosomes. This is Ribosome maturation factor RimM from Burkholderia ambifaria (strain MC40-6).